Reading from the N-terminus, the 300-residue chain is Glycine--tRNA ligase alpha subunit (300 aa).

It belongs to the class-II aminoacyl-tRNA synthetase family. As to quaternary structure, tetramer of two alpha and two beta subunits.

It is found in the cytoplasm. It carries out the reaction tRNA(Gly) + glycine + ATP = glycyl-tRNA(Gly) + AMP + diphosphate. The protein is Glycine--tRNA ligase alpha subunit of Pseudoalteromonas translucida (strain TAC 125).